The chain runs to 225 residues: MRAVVVLSGGMDSTTLLYDVKNQGYETYTISFLYGQKHSKELEFAKKTCELLKVPHKIVDISFFADLAPSALTKSSWSVPEGYYTDESMKQTVVPNRNMVFLSLATSYAISLKAQKLFYGAHAGDHPIYPDCRKEFVEAMKRSILLCDYQIVELEAPYVDLKKEDILKIGLKLGVDYSLTWSCYKGGEKACGRCGTCTERIEAFRKIGVKDPIEYEIEIDWDQKT.

7-17 (LSGGMDSTTLL) provides a ligand contact to ATP. Zn(2+) contacts are provided by Cys-183, Cys-191, Cys-194, and Cys-197.

This sequence belongs to the QueC family. In terms of assembly, homodimer. Requires Zn(2+) as cofactor.

It catalyses the reaction 7-carboxy-7-deazaguanine + NH4(+) + ATP = 7-cyano-7-deazaguanine + ADP + phosphate + H2O + H(+). Its pathway is purine metabolism; 7-cyano-7-deazaguanine biosynthesis. Catalyzes the ATP-dependent conversion of 7-carboxy-7-deazaguanine (CDG) to 7-cyano-7-deazaguanine (preQ(0)). This Caldicellulosiruptor saccharolyticus (strain ATCC 43494 / DSM 8903 / Tp8T 6331) protein is 7-cyano-7-deazaguanine synthase.